The primary structure comprises 149 residues: uncharacterized protein (149 aa).

This is an uncharacterized protein from Acidithiobacillus ferridurans.